Here is a 469-residue protein sequence, read N- to C-terminus: Mitochondrial distribution and morphology protein 10 (469 aa).

The protein belongs to the MDM10 family. As to quaternary structure, component of the ER-mitochondria encounter structure (ERMES) or MDM complex, composed of MMM1, MDM10, MDM12 and MDM34. Associates with the mitochondrial outer membrane sorting assembly machinery SAM(core) complex.

The protein localises to the mitochondrion outer membrane. Its function is as follows. Component of the ERMES/MDM complex, which serves as a molecular tether to connect the endoplasmic reticulum and mitochondria. Components of this complex are involved in the control of mitochondrial shape and protein biogenesis and may function in phospholipid exchange. MDM10 is involved in the late assembly steps of the general translocase of the mitochondrial outer membrane (TOM complex). Functions in the TOM40-specific route of the assembly of outer membrane beta-barrel proteins, including the association of TOM40 with the receptor TOM22 and small TOM proteins. Can associate with the SAM(core) complex as well as the MDM12-MMM1 complex, both involved in late steps of the major beta-barrel assembly pathway, that is responsible for biogenesis of all outer membrane beta-barrel proteins. May act as a switch that shuttles between both complexes and channels precursor proteins into the TOM40-specific pathway. Plays a role in mitochondrial morphology and in the inheritance of mitochondria. This chain is Mitochondrial distribution and morphology protein 10, found in Scheffersomyces stipitis (strain ATCC 58785 / CBS 6054 / NBRC 10063 / NRRL Y-11545) (Yeast).